A 339-amino-acid chain; its full sequence is Anthranilate phosphoribosyltransferase (339 aa).

5-phospho-alpha-D-ribose 1-diphosphate is bound by residues Gly-79, 82–83 (GD), Ser-87, 89–92 (NIST), 107–115 (KHGNRSISS), and Ser-119. Gly-79 is a binding site for anthranilate. Mg(2+) is bound at residue Ser-91. Asn-110 provides a ligand contact to anthranilate. Anthranilate is bound at residue Arg-165. Mg(2+)-binding residues include Asp-224 and Glu-225.

This sequence belongs to the anthranilate phosphoribosyltransferase family. Homodimer. It depends on Mg(2+) as a cofactor.

It catalyses the reaction N-(5-phospho-beta-D-ribosyl)anthranilate + diphosphate = 5-phospho-alpha-D-ribose 1-diphosphate + anthranilate. The protein operates within amino-acid biosynthesis; L-tryptophan biosynthesis; L-tryptophan from chorismate: step 2/5. Functionally, catalyzes the transfer of the phosphoribosyl group of 5-phosphorylribose-1-pyrophosphate (PRPP) to anthranilate to yield N-(5'-phosphoribosyl)-anthranilate (PRA). In Listeria monocytogenes serotype 4b (strain CLIP80459), this protein is Anthranilate phosphoribosyltransferase.